Consider the following 281-residue polypeptide: MKRIVVVSGLSGAGKTTAMGFLEDLGYFCVDNVPGNILEELLKLFMSSDLEKMAMAIDVRSEHLGDPISAVERIKEKTNTLVIFLEASTEELLRRYALTRRRHPLQKDGIGLEDAIEKERKILSRIKEIADVVIDTTSMNTHQLRETLTHFLVNQSGGTSVRIMSFGFKHGIPMDADFVFDARFLPNPHYVPELSSKTGLDSKVEAYFKNYPVVEEFIEKIYEVLKVAIEEYQRTGRRIVTVGIGCTGGKHRSVYIAHRLKEMLEKEGFTVIEKHRDIEKV.

An ATP-binding site is contributed by 9 to 16 (GLSGAGKT). 58–61 (DVRS) provides a ligand contact to GTP.

Belongs to the RapZ-like family.

Functionally, displays ATPase and GTPase activities. In Thermotoga sp. (strain RQ2), this protein is Nucleotide-binding protein TRQ2_1124.